The primary structure comprises 407 residues: Putative glucose/galactose transporter (407 aa).

12 helical membrane-spanning segments follow: residues 11–31 (GSLT…DILI), 47–67 (LIQF…GNVI), 70–90 (IGYP…CALF), 96–116 (FGSY…IVCL), 139–159 (VQAF…LLIF), 180–200 (VQMP…VMYL), 225–245 (FVFG…IGSF), 263–283 (HYLV…SALM), 300–320 (IILI…ALTF), 321–341 (VGFF…LNLG), 349–369 (GVIS…GVVT), and 378–398 (NLLY…FFAL).

Belongs to the major facilitator superfamily. FHS transporter (TC 2.A.1.7) family.

It localises to the cell inner membrane. Functionally, intake of glucose and galactose. This is Putative glucose/galactose transporter (gluP) from Helicobacter pylori (strain J99 / ATCC 700824) (Campylobacter pylori J99).